We begin with the raw amino-acid sequence, 312 residues long: Iron/alpha-ketoglutarate-dependent dioxygenase penM (312 aa).

Positions 134, 136, and 211 each coordinate Fe cation. Positions 287 to 312 (LGLKSEQPLPDGMEKGSMQETDIGGQ) are disordered.

This sequence belongs to the PhyH family. In terms of assembly, homodimer. Requires Fe cation as cofactor.

It carries out the reaction (-)-cyclopeptine + 2-oxoglutarate + O2 = (Z)-dehydrocyclopeptine + succinate + CO2 + H2O. The enzyme catalyses (Z)-dehydrocyclopeptine + 2-oxoglutarate + O2 = (-)-cyclopenine + succinate + CO2. It catalyses the reaction (-)-4'-methoxycyclopeptine + 2-oxoglutarate + O2 = (Z)-4'-methoxydehydrocyclopeptine + succinate + CO2 + H2O. The catalysed reaction is (Z)-4'-methoxydehydrocyclopeptine + 2-oxoglutarate + O2 = (-)-4'-methoxycyclopenine + succinate + CO2. Its pathway is secondary metabolite biosynthesis. The protein operates within alkaloid biosynthesis. It functions in the pathway mycotoxin biosynthesis. Iron/alpha-ketoglutarate-dependent dioxygenase; part of the gene cluster that mediates the biosynthesis of penigequinolones, potent insecticidal alkaloids that contain a highly modified 10-carbon prenyl group. The first stage is catalyzed by the nonribosomal peptide synthetase penN that condenses anthranilic acid and O-methyl-L-tyrosine to produce 4'-methoxycyclopeptin. 4'-methoxycyclopeptin is then converted to 4'-methoxydehydrocyclopeptin by the ketoglutarate-dependent dioxygenase penM through dehydrogenation to form a double bond between C-alpha and C-beta of the O-methyltyrosine side chain. PenM also converts its first product methoxydehydrocyclopeptin to 4'-methoxycyclopenin. The following conversion of 4'methoxycyclopenin into 4'-methoxyviridicatin is catalyzed by the cyclopenase penL. 4'-methoxyviridicatin is the precursor of quinolone natural products, and is further converted to quinolinone B. The prenyltransferase penI then catalyzes the canonical Friedel-Crafts alkylation of quinolinone B with dimethylallyl cation to yield dimethylallyl quinolone, which is subjected to FAD-dependent dehydrogenation by the FAD-linked oxidoreductase penH to yield conjugated aryl diene. The delta(3') double bond then serves as the site of the second alkylation with DMAPP catalyzed by the prenyltransferase penG to yield a carbenium ion intermediate, which can be attacked by H(2)O to yield a styrenyl quinolone containing a C3'-hydroxyprenyl chain, or undergo cyclization to yield yaequinolones J1 and J2. The conversion of the styrenyl quinolone into the tetrahydrofuran-containing yaequinolone C is performed by the FAD-dependent monooxygenase penE and involves epoxidation of the terminal C7'-C8' olefin, followed by epoxide ring opening initiated by the C3' hydroxyl group. The predicted cysteine hydrolase penJ acts as an epoxide hydrolase that enhances the rate of the 5-exo-tet cyclization step, increasing the yield of yaequinolone C. PenF catalyzes the cationic rearrangement of the epoxide formed by penE (before ring opening to produce yaequinolone C) into yaequinolone D. Finally, the short-chain dehydrogenase/reductase (SDR)-like reductase penD, catalyzes both the dehydration of yaequinolone D and the reduction of the resulting oxonium to yield penigequinolone. The chain is Iron/alpha-ketoglutarate-dependent dioxygenase penM from Penicillium thymicola.